A 1414-amino-acid chain; its full sequence is Phenyloxazoline synthase MbtB (1414 aa).

Residues 5-78 (TACSEIIRAE…AWSQLVSAGT (74 aa)) enclose the Carrier 1 domain. Position 39 is an O-(pantetheine 4'-phosphoryl)serine (S39). The interval 96 to 394 (EGEPFPVAPM…SSLLLDVDLT (299 aa)) is condensation/cyclization. The tract at residues 579 to 975 (SYAQLRDQAS…RLPGVHAAAA (397 aa)) is adenylation. In terms of domain architecture, Carrier 2 spans 1057–1135 (APRTVLQRAL…ALAQLLTGRE (79 aa)). The residue at position 1094 (S1094) is an O-(pantetheine 4'-phosphoryl)serine. The tract at residues 1188-1413 (GAVLVFPHAG…AVARMVSADV (226 aa)) is thioesterase.

This sequence belongs to the ATP-dependent AMP-binding enzyme family. MbtB subfamily. Pantetheine 4'-phosphate is required as a cofactor. 4'-phosphopantetheine is transferred from CoA to a specific serine in each of the two carrier protein domains, leading to their activation from apo to holo forms.

The protein operates within siderophore biosynthesis; mycobactin biosynthesis. In terms of biological role, involved in the initial steps of the mycobactin biosynthetic pathway. Putatively couples activated salicylic acid with serine or threonine and cyclizes this precursor to the hydroxyphenyloxazoline ring system present in this class of siderophores. Essential for growth in macrophages. This chain is Phenyloxazoline synthase MbtB (mbtB), found in Mycobacterium tuberculosis (strain CDC 1551 / Oshkosh).